We begin with the raw amino-acid sequence, 79 residues long: Acyl carrier protein (79 aa).

The Carrier domain maps to 6 to 79; the sequence is KEILDGLAEI…VQDVINYIQK (74 aa). At serine 41 the chain carries O-(pantetheine 4'-phosphoryl)serine.

It belongs to the acyl carrier protein (ACP) family. Post-translationally, 4'-phosphopantetheine is transferred from CoA to a specific serine of apo-ACP by AcpS. This modification is essential for activity because fatty acids are bound in thioester linkage to the sulfhydryl of the prosthetic group.

It localises to the cytoplasm. It participates in lipid metabolism; fatty acid biosynthesis. Carrier of the growing fatty acid chain in fatty acid biosynthesis. The polypeptide is Acyl carrier protein (Thermobifida fusca (strain YX)).